The chain runs to 1104 residues: Lon protease homolog, mitochondrial (1104 aa).

A mitochondrion-targeting transit peptide spans 1–58; the sequence is MLPLRAFARLAQRPRLSRPTQLARSSLPRPSPSRPAAHYLALAPAPSTRFLHSSPPVL. Disordered stretches follow at residues 8 to 144 and 275 to 295; these read ARLA…KEVA and EGSQDSAKGEGEVKSFESEVP. The segment covering 22-46 has biased composition (low complexity); sequence LARSSLPRPSPSRPAAHYLALAPAP. A compositionally biased stretch (basic and acidic residues) spans 80–103; that stretch reads KQDDQVEKPLPDAESSKSAEERAK. A compositionally biased stretch (low complexity) spans 104–128; that stretch reads SQSSKPDIKASSSDSVSSSAPAPGS. Gly residues predominate over residues 129–139; it reads ADGGSPPGAGG. In terms of domain architecture, Lon N-terminal spans 155–444; sequence VLAIPITHRP…RALVLLKKEL (290 aa). A compositionally biased stretch (basic and acidic residues) spans 281–291; it reads AKGEGEVKSFE. 597-604 provides a ligand contact to ATP; that stretch reads GPPGVGKT. Residues 895-1082 enclose the Lon proteolytic domain; sequence SPPAGVSTGL…RQVLHEAFRG (188 aa). Residues serine 987 and lysine 1030 contribute to the active site.

Belongs to the peptidase S16 family. As to quaternary structure, homohexamer or homoheptamer. Organized in a ring with a central cavity.

It is found in the mitochondrion matrix. It carries out the reaction Hydrolysis of proteins in presence of ATP.. Its function is as follows. ATP-dependent serine protease that mediates the selective degradation of misfolded, unassembled or oxidatively damaged polypeptides as well as certain short-lived regulatory proteins in the mitochondrial matrix. May also have a chaperone function in the assembly of inner membrane protein complexes. Participates in the regulation of mitochondrial gene expression and in the maintenance of the integrity of the mitochondrial genome. Binds to mitochondrial DNA in a site-specific manner. The chain is Lon protease homolog, mitochondrial from Cryptococcus neoformans var. neoformans serotype D (strain JEC21 / ATCC MYA-565) (Filobasidiella neoformans).